We begin with the raw amino-acid sequence, 112 residues long: Large ribosomal subunit protein uL22 (112 aa).

This sequence belongs to the universal ribosomal protein uL22 family. Part of the 50S ribosomal subunit.

In terms of biological role, this protein binds specifically to 23S rRNA; its binding is stimulated by other ribosomal proteins, e.g. L4, L17, and L20. It is important during the early stages of 50S assembly. It makes multiple contacts with different domains of the 23S rRNA in the assembled 50S subunit and ribosome. The globular domain of the protein is located near the polypeptide exit tunnel on the outside of the subunit, while an extended beta-hairpin is found that lines the wall of the exit tunnel in the center of the 70S ribosome. This is Large ribosomal subunit protein uL22 from Desulfovibrio desulfuricans (strain ATCC 27774 / DSM 6949 / MB).